Reading from the N-terminus, the 148-residue chain is D-aminoacyl-tRNA deacylase (148 aa).

A Gly-cisPro motif, important for rejection of L-amino acids motif is present at residues 137-138 (GP).

The protein belongs to the DTD family. As to quaternary structure, homodimer.

The protein resides in the cytoplasm. The catalysed reaction is glycyl-tRNA(Ala) + H2O = tRNA(Ala) + glycine + H(+). It carries out the reaction a D-aminoacyl-tRNA + H2O = a tRNA + a D-alpha-amino acid + H(+). An aminoacyl-tRNA editing enzyme that deacylates mischarged D-aminoacyl-tRNAs. Also deacylates mischarged glycyl-tRNA(Ala), protecting cells against glycine mischarging by AlaRS. Acts via tRNA-based rather than protein-based catalysis; rejects L-amino acids rather than detecting D-amino acids in the active site. By recycling D-aminoacyl-tRNA to D-amino acids and free tRNA molecules, this enzyme counteracts the toxicity associated with the formation of D-aminoacyl-tRNA entities in vivo and helps enforce protein L-homochirality. In Lacticaseibacillus casei (strain BL23) (Lactobacillus casei), this protein is D-aminoacyl-tRNA deacylase.